The following is a 477-amino-acid chain: Cysteine--tRNA ligase (477 aa).

Position 28 (cysteine 28) interacts with Zn(2+). Residues 30–40 carry the 'HIGH' region motif; that stretch reads PTVYDYAHIGN. Positions 213, 238, and 242 each coordinate Zn(2+). The short motif at 270–274 is the 'KMSKS' region element; the sequence is KMSKS. ATP is bound at residue lysine 273.

The protein belongs to the class-I aminoacyl-tRNA synthetase family. In terms of assembly, monomer. It depends on Zn(2+) as a cofactor.

It localises to the cytoplasm. It catalyses the reaction tRNA(Cys) + L-cysteine + ATP = L-cysteinyl-tRNA(Cys) + AMP + diphosphate. The polypeptide is Cysteine--tRNA ligase (Chlamydia trachomatis serovar A (strain ATCC VR-571B / DSM 19440 / HAR-13)).